The primary structure comprises 589 residues: Transmembrane 9 superfamily member 3 (589 aa).

A signal peptide spans 1–28; it reads MRPLPGALGVAAAAALWLLLLLLPRTRA. N-linked (GlcNAc...) asparagine glycosylation occurs at Asn-174. 5 helical membrane-spanning segments follow: residues 224 to 244, 294 to 314, 328 to 348, 360 to 380, and 389 to 409; these read FSIF…SMIL, LIGS…VAMI, AIFV…SLYA, FIGA…INFI, and AIPF…ILPL. Asn-419 carries N-linked (GlcNAc...) asparagine glycosylation. 4 consecutive transmembrane segments (helical) span residues 449-469, 482-502, 519-539, and 551-571; these read IVCL…YFIF, GFMM…TIVC, FLSA…YYFF, and FYFG…GAIG.

It belongs to the nonaspanin (TM9SF) (TC 9.A.2) family.

The protein resides in the membrane. The polypeptide is Transmembrane 9 superfamily member 3 (TM9SF3) (Homo sapiens (Human)).